The sequence spans 96 residues: MNLRPLHDRVIVKRLDQETKTASGLIIPEAAAEKPDQGEVLAIGNGKILDDGKVRPLDVKVGDRVLFGKYAGQSVKVDGNEVLVMREEDIMAIVQK.

It belongs to the GroES chaperonin family. In terms of assembly, heptamer of 7 subunits arranged in a ring. Interacts with the chaperonin GroEL.

The protein resides in the cytoplasm. In terms of biological role, together with the chaperonin GroEL, plays an essential role in assisting protein folding. The GroEL-GroES system forms a nano-cage that allows encapsulation of the non-native substrate proteins and provides a physical environment optimized to promote and accelerate protein folding. GroES binds to the apical surface of the GroEL ring, thereby capping the opening of the GroEL channel. The protein is Co-chaperonin GroES of Herminiimonas arsenicoxydans.